The following is a 135-amino-acid chain: Nucleoside diphosphate kinase (135 aa).

Residues K9, Y57, R85, T91, R102, and N112 each contribute to the ATP site. The active-site Pros-phosphohistidine intermediate is the H115.

The protein belongs to the NDK family. As to quaternary structure, homotetramer. Mg(2+) serves as cofactor.

The protein localises to the cytoplasm. The enzyme catalyses a 2'-deoxyribonucleoside 5'-diphosphate + ATP = a 2'-deoxyribonucleoside 5'-triphosphate + ADP. It catalyses the reaction a ribonucleoside 5'-diphosphate + ATP = a ribonucleoside 5'-triphosphate + ADP. Major role in the synthesis of nucleoside triphosphates other than ATP. The ATP gamma phosphate is transferred to the NDP beta phosphate via a ping-pong mechanism, using a phosphorylated active-site intermediate. In Thermoanaerobacter pseudethanolicus (strain ATCC 33223 / 39E) (Clostridium thermohydrosulfuricum), this protein is Nucleoside diphosphate kinase.